The primary structure comprises 271 residues: uncharacterized protein (271 aa).

Solcar repeat units follow at residues 3–74, 81–163, and 171–268; these read VQTL…AKRR, EGAI…SKKY, and DISV…FKSK. 6 helical membrane passes run 5–26, 49–69, 84–104, 138–158, 170–190, and 240–261; these read TLMA…IDTI, GLPI…STYV, ILYS…WTPL, GYWM…VCYE, WDIS…ATTI, and FTRG…SMSV.

This sequence belongs to the mitochondrial carrier (TC 2.A.29) family.

Its subcellular location is the mitochondrion inner membrane. This is an uncharacterized protein from Schizosaccharomyces pombe (strain 972 / ATCC 24843) (Fission yeast).